The following is a 463-amino-acid chain: Fumarate hydratase class II (463 aa).

Substrate is bound by residues 97–99 (SGT), 128–131 (HPND), 138–140 (SSN), and Thr-186. Catalysis depends on His-187, which acts as the Proton donor/acceptor. The active site involves Ser-317. Substrate contacts are provided by residues Ser-318 and 323 to 325 (KVN).

This sequence belongs to the class-II fumarase/aspartase family. Fumarase subfamily. Homotetramer.

The protein localises to the cytoplasm. The catalysed reaction is (S)-malate = fumarate + H2O. It functions in the pathway carbohydrate metabolism; tricarboxylic acid cycle; (S)-malate from fumarate: step 1/1. In terms of biological role, involved in the TCA cycle. Catalyzes the stereospecific interconversion of fumarate to L-malate. The protein is Fumarate hydratase class II of Helicobacter pylori (strain J99 / ATCC 700824) (Campylobacter pylori J99).